We begin with the raw amino-acid sequence, 64 residues long: Large ribosomal subunit protein bL35 (64 aa).

Belongs to the bacterial ribosomal protein bL35 family.

This chain is Large ribosomal subunit protein bL35, found in Aliivibrio fischeri (strain ATCC 700601 / ES114) (Vibrio fischeri).